Reading from the N-terminus, the 505-residue chain is RNA-splicing ligase RtcB homolog (505 aa).

Mn(2+) contacts are provided by aspartate 119, cysteine 122, histidine 227, histidine 259, and histidine 353. 226 to 230 is a binding site for GMP; the sequence is NHYAE. Residues 353-354, 402-405, serine 409, 428-431, and lysine 504 contribute to the GMP site; these read HN, GGSM, and HGAG. The active-site GMP-histidine intermediate is the histidine 428.

Belongs to the RtcB family. In terms of assembly, catalytic component of the tRNA-splicing ligase complex. The cofactor is Mn(2+).

It is found in the nucleus. Its subcellular location is the cytoplasm. It carries out the reaction a 3'-end 3'-phospho-ribonucleotide-RNA + a 5'-end dephospho-ribonucleoside-RNA + GTP = a ribonucleotidyl-ribonucleotide-RNA + GMP + diphosphate. The catalysed reaction is a 3'-end 2',3'-cyclophospho-ribonucleotide-RNA + a 5'-end dephospho-ribonucleoside-RNA + GTP + H2O = a ribonucleotidyl-ribonucleotide-RNA + GMP + diphosphate + H(+). Catalytic subunit of the tRNA-splicing ligase complex that acts by directly joining spliced tRNA halves to mature-sized tRNAs. Required for the ligation of mRNAs and specifically, regulates xbp-1 mRNA splicing during the endoplasmic reticulum stress-induced unfolded protein response. Has a neuroprotective role in the age-dependent degeneration of dopamine neurons, which is mediated by xbp-1. The chain is RNA-splicing ligase RtcB homolog from Caenorhabditis elegans.